The following is a 424-amino-acid chain: Delta(14)-sterol reductase erg24 (424 aa).

Helical transmembrane passes span 19 to 39 (IGAL…FYIC) and 112 to 132 (LILG…MEFI). Residues Lys-317, Arg-321, Leu-344, Trp-349, and 356–357 (NY) each bind NADP(+). The chain crosses the membrane as a helical span at residues 370 to 390 (PAGFGSPIPYFYVAYFGVLLV). Residues Asp-396, 400–404 (CRVKY), and Tyr-411 contribute to the NADP(+) site.

It belongs to the ERG4/ERG24 family.

The protein resides in the endoplasmic reticulum membrane. The catalysed reaction is 4,4-dimethyl-5alpha-cholesta-8,24-dien-3beta-ol + NADP(+) = 4,4-dimethyl-5alpha-cholesta-8,14,24-trien-3beta-ol + NADPH + H(+). It functions in the pathway steroid biosynthesis; zymosterol biosynthesis; zymosterol from lanosterol: step 2/6. It participates in steroid metabolism; ergosterol biosynthesis. Delta(14)-sterol reductase; part of the third module of ergosterol biosynthesis pathway that includes by the late steps of the pathway. Erg24 reduces the C14=C15 double bond of 4,4-dimethyl-cholesta-8,14,24-trienol to produce 4,4-dimethyl-cholesta-8,24-dienol. The third module or late pathway involves the ergosterol synthesis itself through consecutive reactions that mainly occur in the endoplasmic reticulum (ER) membrane. Firstly, the squalene synthase erg9 catalyzes the condensation of 2 farnesyl pyrophosphate moieties to form squalene, which is the precursor of all steroids. Secondly, squalene is converted into lanosterol by the consecutive action of the squalene epoxidase erg1 and the lanosterol synthase erg7. The lanosterol 14-alpha-demethylase erg11/cyp1 catalyzes C14-demethylation of lanosterol to produce 4,4'-dimethyl cholesta-8,14,24-triene-3-beta-ol. In the next steps, a complex process involving various demethylation, reduction and desaturation reactions catalyzed by the C-14 reductase erg24 and the C-4 demethylation complex erg25-erg26-erg27 leads to the production of zymosterol. Erg28 likely functions in the C-4 demethylation complex reaction by tethering erg26 and Erg27 to the endoplasmic reticulum or to facilitate interaction between these proteins. Then, the sterol 24-C-methyltransferase erg6 catalyzes the methyl transfer from S-adenosyl-methionine to the C-24 of zymosterol to form fecosterol. The C-8 sterol isomerase erg2 catalyzes the reaction which results in unsaturation at C-7 in the B ring of sterols and thus converts fecosterol to episterol. The sterol-C5-desaturases erg31 and erg32 then catalyze the introduction of a C-5 double bond in the B ring to produce 5-dehydroepisterol. The C-22 sterol desaturase erg5 further converts 5-dehydroepisterol into ergosta-5,7,22,24(28)-tetraen-3beta-ol by forming the C-22(23) double bond in the sterol side chain. Finally, ergosta-5,7,22,24(28)-tetraen-3beta-ol is substrate of the C-24(28) sterol reductase erg4 to produce ergosterol. In the genus Schizosaccharomyces, a second route exists between lanosterol and fecosterol, via the methylation of lanosterol to eburicol by erg6, followed by C14-demethylation by erg11/cyp1 and C4-demethylation by the demethylation complex erg25-erg26-erg27. The sequence is that of Delta(14)-sterol reductase erg24 from Schizosaccharomyces pombe (strain 972 / ATCC 24843) (Fission yeast).